A 230-amino-acid polypeptide reads, in one-letter code: Ribonuclease HII (230 aa).

The RNase H type-2 domain maps to 1–224; sequence MIIIGIDEAG…CKRILDKSKQ (224 aa). Positions 7, 8, and 112 each coordinate a divalent metal cation.

This sequence belongs to the RNase HII family. Requires Mn(2+) as cofactor. It depends on Mg(2+) as a cofactor.

It is found in the cytoplasm. It carries out the reaction Endonucleolytic cleavage to 5'-phosphomonoester.. Functionally, endonuclease that specifically degrades the RNA of RNA-DNA hybrids. The sequence is that of Ribonuclease HII (rnhB) from Methanocaldococcus jannaschii (strain ATCC 43067 / DSM 2661 / JAL-1 / JCM 10045 / NBRC 100440) (Methanococcus jannaschii).